Consider the following 365-residue polypeptide: MVPEMSERQVFQASELTYLLENCSSSYDYAENESDSCCASPPCPQDISLNFDRAFLPALYGLLFLLGLLGNGAVAAVLCSQRAARTSTDTFLLHLAVADMLLVLTLPLWRVDTAVQWVFGSGLCKVAGALFNINFYAGALLLACISFDRYLSIVHATQPYRRGPPARVTLTCVVVWGLCLFFAIPDFIFLSANRDERLNAMHCRYNFPQVGRTALRGLQLVAGFLLPLLVMAYCYARILAVLLVSRGQRRQRRMRLVVVVVVAFALCWTPYHLVVLVDTLMDLGALDRNCGRESRVDVAKSVTSGLGYMHCCLNPLLYAFVGVKFRERMWMLLLRLGCPDHRGHQRHPTLSRRESSWSETPSTPR.

Residues Met1–Pro57 are Extracellular-facing. Asn22 is a glycosylation site (N-linked (GlcNAc...) asparagine). Residues Tyr27 and Tyr29 each carry the sulfotyrosine modification. Asn32 is a glycosylation site (N-linked (GlcNAc...) asparagine). The helical transmembrane segment at Ala58 to Leu78 threads the bilayer. Residues Cys79 to Thr88 lie on the Cytoplasmic side of the membrane. Residues Asp89–Trp109 form a helical membrane-spanning segment. At Arg110–Val126 the chain is on the extracellular side. The cysteines at positions 124 and 203 are disulfide-linked. The chain crosses the membrane as a helical span at residues Ala127–Phe147. The Cytoplasmic portion of the chain corresponds to Asp148 to Thr169. A helical membrane pass occupies residues Leu170 to Leu190. The Extracellular segment spans residues Ser191–Gly223. Residues Phe224–Val244 form a helical membrane-spanning segment. Over Ser245–Leu256 the chain is Cytoplasmic. The helical transmembrane segment at Val257–Val277 threads the bilayer. At Asp278–Ser301 the chain is on the extracellular side. A helical membrane pass occupies residues Val302–Gly322. Residues Val323–Arg365 are Cytoplasmic-facing. The segment at Arg342–Arg365 is disordered.

This sequence belongs to the G-protein coupled receptor 1 family. In terms of assembly, homomer. Forms heteromers with ACKR4. Interacts with PF4/CXCL4. Sulfation on Tyr-27 and Tyr-29 is essential for CXCL10 binding. Post-translationally, N-glycosylated.

The protein resides in the cell membrane. Functionally, receptor for the C-X-C chemokine CXCL9, CXCL10 and CXCL11 and mediates the proliferation, survival and angiogenic activity of mesangial cells through a heterotrimeric G-protein signaling pathway. Probably promotes cell chemotaxis response. Binds to CCL21. Upon activation by PF4, induces activated T-lymphocytes migration mediated via downstream Ras/extracellular signal-regulated kinase (ERK) signaling. The protein is C-X-C chemokine receptor type 3 (CXCR3) of Canis lupus familiaris (Dog).